A 282-amino-acid polypeptide reads, in one-letter code: Non-selective voltage-gated ion channel VDAC2 (282 aa).

An N-acetylalanine modification is found at alanine 1. 19 consecutive transmembrane segments (beta stranded) span residues 25–34 (LVKLDVKTKS), 38–46 (VEFTTSGTS), 53–63 (VNGSLETKYKW), 68–75 (LTFTEKWN), 79–88 (TLGTEIAIED), 94–103 (LKLTFDTTFS), 110–119 (SGKVKAAYKQ), 122–129 (VNLGCDVD), 136–144 (AIHGSAVVG), 149–157 (LAGYQMTFD), 162–174 (KLTK…GYKT), 177–184 (FQLHTNVN), 188–197 (EFAGSIYQKV), 201–210 (METAVNLAWT), 217–226 (RFGIAAKYQL), 230–237 (AAISAKVN), 241–250 (LVGVGYTQTL), 253–262 (GVKLTLSALV), and 272–281 (HKLGLGLELE). Residues 241–243 (LVG) and 259–263 (SALVD) contribute to the NAD(+) site.

The protein belongs to the eukaryotic mitochondrial porin family. Monomer, homodimer and higher order oligomers; formation of higher order structures is necessary for scramblase activity. Expressed in skeletal muscle and oocytes.

It localises to the mitochondrion outer membrane. It is found in the membrane. It carries out the reaction chloride(in) = chloride(out). The catalysed reaction is K(+)(in) = K(+)(out). It catalyses the reaction a 1,2-diacyl-sn-glycero-3-phospho-L-serine(in) = a 1,2-diacyl-sn-glycero-3-phospho-L-serine(out). The enzyme catalyses a 1,2-diacyl-sn-glycero-3-phosphocholine(in) = a 1,2-diacyl-sn-glycero-3-phosphocholine(out). It carries out the reaction a 1,2-diacyl-sn-glycero-3-phospho-(1D-myo-inositol)(in) = a 1,2-diacyl-sn-glycero-3-phospho-(1D-myo-inositol)(out). Functionally, non-selective voltage-gated ion channel that mediates the transport of anions and cations through the mitochondrion outer membrane and plasma membrane. The channel adopts an open conformation at zero mV and a closed conformation at both positive and negative potentials. There are two populations of channels; the main that functions in a lower open-state conductance with lower ion selectivity, that switch, in a voltage-dependent manner, from the open to a low-conducting 'closed' state and the other that has a normal ion selectivity in the typical high conductance, 'open' state. In terms of biological role, catalyzes the scrambling of phospholipids across the outer mitochondrial membrane; the mechanism is unrelated to channel activity and is capable of translocating both anionic and zwitterionic phospholipids. The sequence is that of Non-selective voltage-gated ion channel VDAC2 from Xenopus laevis (African clawed frog).